Consider the following 470-residue polypeptide: Siroheme synthase (470 aa).

The segment at 1 to 203 (MEFFPIFLKL…GDEAAARAEM (203 aa)) is precorrin-2 dehydrogenase /sirohydrochlorin ferrochelatase. NAD(+) is bound by residues 22-23 (EV) and 43-44 (PE). At S128 the chain carries Phosphoserine. The segment at 216–470 (GAVYLVGAGP…ENSAVTIQED (255 aa)) is uroporphyrinogen-III C-methyltransferase. An S-adenosyl-L-methionine-binding site is contributed by P225. D248 functions as the Proton acceptor in the catalytic mechanism. K270 (proton donor) is an active-site residue. S-adenosyl-L-methionine is bound by residues 301–303 (GGD), M383, and A412.

This sequence in the N-terminal section; belongs to the precorrin-2 dehydrogenase / sirohydrochlorin ferrochelatase family. The protein in the C-terminal section; belongs to the precorrin methyltransferase family.

The enzyme catalyses uroporphyrinogen III + 2 S-adenosyl-L-methionine = precorrin-2 + 2 S-adenosyl-L-homocysteine + H(+). It carries out the reaction precorrin-2 + NAD(+) = sirohydrochlorin + NADH + 2 H(+). It catalyses the reaction siroheme + 2 H(+) = sirohydrochlorin + Fe(2+). It participates in cofactor biosynthesis; adenosylcobalamin biosynthesis; precorrin-2 from uroporphyrinogen III: step 1/1. It functions in the pathway cofactor biosynthesis; adenosylcobalamin biosynthesis; sirohydrochlorin from precorrin-2: step 1/1. The protein operates within porphyrin-containing compound metabolism; siroheme biosynthesis; precorrin-2 from uroporphyrinogen III: step 1/1. Its pathway is porphyrin-containing compound metabolism; siroheme biosynthesis; siroheme from sirohydrochlorin: step 1/1. It participates in porphyrin-containing compound metabolism; siroheme biosynthesis; sirohydrochlorin from precorrin-2: step 1/1. Multifunctional enzyme that catalyzes the SAM-dependent methylations of uroporphyrinogen III at position C-2 and C-7 to form precorrin-2 via precorrin-1. Then it catalyzes the NAD-dependent ring dehydrogenation of precorrin-2 to yield sirohydrochlorin. Finally, it catalyzes the ferrochelation of sirohydrochlorin to yield siroheme. The protein is Siroheme synthase of Chromobacterium violaceum (strain ATCC 12472 / DSM 30191 / JCM 1249 / CCUG 213 / NBRC 12614 / NCIMB 9131 / NCTC 9757 / MK).